A 359-amino-acid chain; its full sequence is Protein mab-21-like 2 (359 aa).

Belongs to the mab-21 family.

It localises to the nucleus. Its subcellular location is the cytoplasm. Functionally, required for several aspects of embryonic development including normal development of the eye. The sequence is that of Protein mab-21-like 2 (mab21l2) from Xenopus tropicalis (Western clawed frog).